The chain runs to 294 residues: N-acetylmuramic acid 6-phosphate etherase (294 aa).

An SIS domain is found at V54–K217. Catalysis depends on E82, which acts as the Proton donor. Residue E113 is part of the active site.

It belongs to the GCKR-like family. MurNAc-6-P etherase subfamily. As to quaternary structure, homodimer.

It catalyses the reaction N-acetyl-D-muramate 6-phosphate + H2O = N-acetyl-D-glucosamine 6-phosphate + (R)-lactate. It functions in the pathway amino-sugar metabolism; N-acetylmuramate degradation. Its function is as follows. Specifically catalyzes the cleavage of the D-lactyl ether substituent of MurNAc 6-phosphate, producing GlcNAc 6-phosphate and D-lactate. The polypeptide is N-acetylmuramic acid 6-phosphate etherase (Bacillus cereus (strain ATCC 14579 / DSM 31 / CCUG 7414 / JCM 2152 / NBRC 15305 / NCIMB 9373 / NCTC 2599 / NRRL B-3711)).